The primary structure comprises 957 residues: Glycine dehydrogenase (decarboxylating) (957 aa).

N6-(pyridoxal phosphate)lysine is present on K708.

The protein belongs to the GcvP family. The glycine cleavage system is composed of four proteins: P, T, L and H. It depends on pyridoxal 5'-phosphate as a cofactor.

The catalysed reaction is N(6)-[(R)-lipoyl]-L-lysyl-[glycine-cleavage complex H protein] + glycine + H(+) = N(6)-[(R)-S(8)-aminomethyldihydrolipoyl]-L-lysyl-[glycine-cleavage complex H protein] + CO2. The glycine cleavage system catalyzes the degradation of glycine. The P protein binds the alpha-amino group of glycine through its pyridoxal phosphate cofactor; CO(2) is released and the remaining methylamine moiety is then transferred to the lipoamide cofactor of the H protein. This is Glycine dehydrogenase (decarboxylating) from Shigella sonnei (strain Ss046).